A 129-amino-acid chain; its full sequence is uncharacterized protein (129 aa).

Helical transmembrane passes span 35-55 (IVDG…WKIP) and 98-118 (ILLL…IILL).

Its subcellular location is the membrane. This is an uncharacterized protein from Saccharomyces cerevisiae (strain ATCC 204508 / S288c) (Baker's yeast).